The sequence spans 455 residues: Probable glycine dehydrogenase (decarboxylating) subunit 1 (455 aa).

The protein belongs to the GcvP family. N-terminal subunit subfamily. The glycine cleavage system is composed of four proteins: P, T, L and H. In this organism, the P 'protein' is a heterodimer of two subunits.

The enzyme catalyses N(6)-[(R)-lipoyl]-L-lysyl-[glycine-cleavage complex H protein] + glycine + H(+) = N(6)-[(R)-S(8)-aminomethyldihydrolipoyl]-L-lysyl-[glycine-cleavage complex H protein] + CO2. Functionally, the glycine cleavage system catalyzes the degradation of glycine. The P protein binds the alpha-amino group of glycine through its pyridoxal phosphate cofactor; CO(2) is released and the remaining methylamine moiety is then transferred to the lipoamide cofactor of the H protein. The sequence is that of Probable glycine dehydrogenase (decarboxylating) subunit 1 from Francisella tularensis subsp. mediasiatica (strain FSC147).